A 247-amino-acid polypeptide reads, in one-letter code: MEGDCLSCMKYLMFLFNFFIFLGGACLLGVGIWVIVDPTGFREIVAANPLLFTGAYIMLAMGAMLFLLGFLGCCGAIRENKCLLLFFFMFILLIFLAELSAAILAFIFRENLTREFFTKELKKHYVRNNDTHVFSSTWNSVMITFACCGVNGPEDFEAVPPLSHLPLEETTPEACCQRKLQSREGMFVNRKACLEGDERFQNRQGCYTVILNSFETYVYLAGALAIGVLAIELFAMIFAMCLFRGIQ.

At 1 to 15 the chain is on the cytoplasmic side; that stretch reads MEGDCLSCMKYLMFL. Residues 16-36 traverse the membrane as a helical segment; the sequence is FNFFIFLGGACLLGVGIWVIV. Residues 37–49 are Extracellular-facing; that stretch reads DPTGFREIVAANP. A helical transmembrane segment spans residues 50–70; that stretch reads LLFTGAYIMLAMGAMLFLLGF. Residues 71–82 are Cytoplasmic-facing; sequence LGCCGAIRENKC. Residues 83–103 traverse the membrane as a helical segment; the sequence is LLLFFFMFILLIFLAELSAAI. Over 104-222 the chain is Extracellular; the sequence is LAFIFRENLT…SFETYVYLAG (119 aa). 2 N-linked (GlcNAc...) asparagine glycosylation sites follow: Asn111 and Asn129. A helical membrane pass occupies residues 223–243; sequence ALAIGVLAIELFAMIFAMCLF. Residues 244–247 lie on the Cytoplasmic side of the membrane; it reads RGIQ.

This sequence belongs to the tetraspanin (TM4SF) family.

It is found in the membrane. Maintains CDH6 protein and promotes CDH6-dependent adherens junctions, inhibiting neural crest migration. The polypeptide is Tetraspanin-18 (Gallus gallus (Chicken)).